A 98-amino-acid chain; its full sequence is NADH-ubiquinone oxidoreductase chain 4L (98 aa).

3 consecutive transmembrane segments (helical) span residues 1-21 (MTLIHMNIIMAFSMSLVGLLM), 29-49 (ALLCLEGMMLSLFVLAALTIL), and 61-81 (IILLVFAACEAAIGLALLVTI).

This sequence belongs to the complex I subunit 4L family. In terms of assembly, core subunit of respiratory chain NADH dehydrogenase (Complex I) which is composed of 45 different subunits.

Its subcellular location is the mitochondrion inner membrane. It carries out the reaction a ubiquinone + NADH + 5 H(+)(in) = a ubiquinol + NAD(+) + 4 H(+)(out). In terms of biological role, core subunit of the mitochondrial membrane respiratory chain NADH dehydrogenase (Complex I) which catalyzes electron transfer from NADH through the respiratory chain, using ubiquinone as an electron acceptor. Part of the enzyme membrane arm which is embedded in the lipid bilayer and involved in proton translocation. This chain is NADH-ubiquinone oxidoreductase chain 4L (MT-ND4L), found in Eubalaena australis (Southern right whale).